Reading from the N-terminus, the 449-residue chain is Glucose-6-phosphate isomerase (449 aa).

The active-site Proton donor is Glu291. Catalysis depends on residues His312 and Lys426.

It belongs to the GPI family.

The protein resides in the cytoplasm. The catalysed reaction is alpha-D-glucose 6-phosphate = beta-D-fructose 6-phosphate. The protein operates within carbohydrate biosynthesis; gluconeogenesis. It participates in carbohydrate degradation; glycolysis; D-glyceraldehyde 3-phosphate and glycerone phosphate from D-glucose: step 2/4. Functionally, catalyzes the reversible isomerization of glucose-6-phosphate to fructose-6-phosphate. This is Glucose-6-phosphate isomerase from Streptococcus thermophilus (strain CNRZ 1066).